The primary structure comprises 580 residues: Zinc finger CCCH domain-containing protein 47 (580 aa).

ANK repeat units lie at residues 72-102 and 107-139; these read EERT…DVNR and ERVT…LVNS. C3H1-type zinc fingers lie at residues 251-278 and 286-310; these read PYTC…HGVF and QYKT…HKRE. The disordered stretch occupies residues 421 to 451; the sequence is YVSSPSRNSQMGQNMNQHYPSSPVRQPPSQH.

Expressed in roots and anthers.

It localises to the nucleus. In terms of biological role, involved in salt stress response. May positively modulate plant tolerance to salt stress. The polypeptide is Zinc finger CCCH domain-containing protein 47 (Arabidopsis thaliana (Mouse-ear cress)).